The chain runs to 396 residues: S-adenosylmethionine synthase (396 aa).

His16 is a binding site for ATP. Asp18 is a binding site for Mg(2+). Glu44 lines the K(+) pocket. The L-methionine site is built by Glu57 and Gln100. Residues 100 to 110 (QSPDIAQGVDR) are flexible loop. ATP is bound by residues 167–169 (DAK), 233–234 (RF), Asp242, 248–249 (RK), Ala265, and Lys269. Asp242 contributes to the L-methionine binding site. Lys273 provides a ligand contact to L-methionine.

Belongs to the AdoMet synthase family. Homotetramer; dimer of dimers. It depends on Mg(2+) as a cofactor. The cofactor is K(+).

The protein localises to the cytoplasm. The catalysed reaction is L-methionine + ATP + H2O = S-adenosyl-L-methionine + phosphate + diphosphate. Its pathway is amino-acid biosynthesis; S-adenosyl-L-methionine biosynthesis; S-adenosyl-L-methionine from L-methionine: step 1/1. Its function is as follows. Catalyzes the formation of S-adenosylmethionine (AdoMet) from methionine and ATP. The overall synthetic reaction is composed of two sequential steps, AdoMet formation and the subsequent tripolyphosphate hydrolysis which occurs prior to release of AdoMet from the enzyme. This Paraburkholderia xenovorans (strain LB400) protein is S-adenosylmethionine synthase.